Consider the following 382-residue polypeptide: Small ribosomal subunit protein bS1 homolog (382 aa).

S1 motif domains are found at residues 16–84, 102–167, 188–256, and 273–342; these read GDVV…LSKR, KEVF…LSHR, GSVL…LSIK, and GDVL…LSMR. Position 243 is a phosphoserine (Ser243).

The protein belongs to the bacterial ribosomal protein bS1 family.

Plays a role in sporulation. Cannot be expressed in wild-type E.coli, does not complement an E.coli rpsA deletion. In Bacillus subtilis (strain 168), this protein is Small ribosomal subunit protein bS1 homolog.